We begin with the raw amino-acid sequence, 201 residues long: Lipoprotein signal peptidase (201 aa).

Helical transmembrane passes span 73–93 and 97–117; these read SNAI…YLMI and TIGS…NLID. Active-site residues include Asp126 and Asp144. Residues 135–155 traverse the membrane as a helical segment; sequence YSFPVFNLADCFITIGVIILI.

The protein belongs to the peptidase A8 family.

Its subcellular location is the cell inner membrane. The catalysed reaction is Release of signal peptides from bacterial membrane prolipoproteins. Hydrolyzes -Xaa-Yaa-Zaa-|-(S,diacylglyceryl)Cys-, in which Xaa is hydrophobic (preferably Leu), and Yaa (Ala or Ser) and Zaa (Gly or Ala) have small, neutral side chains.. It participates in protein modification; lipoprotein biosynthesis (signal peptide cleavage). In terms of biological role, this protein specifically catalyzes the removal of signal peptides from prolipoproteins. The polypeptide is Lipoprotein signal peptidase (Rickettsia africae (strain ESF-5)).